The chain runs to 339 residues: UDP-N-acetylenolpyruvoylglucosamine reductase (339 aa).

Positions 19–189 (VDVRAQLFAE…LRVRFALNRV (171 aa)) constitute an FAD-binding PCMH-type domain. R166 is a catalytic residue. Catalysis depends on S239, which acts as the Proton donor. E335 is a catalytic residue.

Belongs to the MurB family. It depends on FAD as a cofactor.

Its subcellular location is the cytoplasm. It catalyses the reaction UDP-N-acetyl-alpha-D-muramate + NADP(+) = UDP-N-acetyl-3-O-(1-carboxyvinyl)-alpha-D-glucosamine + NADPH + H(+). It participates in cell wall biogenesis; peptidoglycan biosynthesis. In terms of biological role, cell wall formation. This is UDP-N-acetylenolpyruvoylglucosamine reductase from Pseudomonas fluorescens (strain Pf0-1).